We begin with the raw amino-acid sequence, 416 residues long: Phosphatidylinositol 5-phosphate 4-kinase type-2 beta (416 aa).

An N-acetylserine modification is found at Ser-2. At Thr-8 the chain carries Phosphothreonine. The residue at position 19 (Ser-19) is a Phosphoserine. In terms of domain architecture, PIPK spans 38 to 415 (ASEPILSVLM…RFNEFMSNIL (378 aa)). The tract at residues 64-70 (VMLMPDD) is required for interaction with PIP5K1A. Residues Lys-94 and Lys-150 each carry the N6-acetyllysine modification. Residues 202-204 (RNV) and Lys-214 each bind ATP. GTP contacts are provided by residues 203–204 (NV) and Lys-214. Residue Thr-322 is modified to Phosphothreonine. Residue Ser-326 is modified to Phosphoserine. Residue Asp-369 coordinates GTP.

Homodimer. Binds TNFRSF1A. Interacts with PIP4K2A; the interaction suppresses ubiquitination by the SPOP/CUL3 complex. Post-translationally, ubiquitinated by the SPOP/CUL3 complex. Ubiquitination is stimulated by PtdIns5P levels. In terms of processing, phosphorylated on serine residues. As to expression, highly expressed in brain, heart, pancreas, skeletal muscle and kidney. Detected at lower levels in placenta, lung and liver.

The protein localises to the endoplasmic reticulum membrane. It is found in the cell membrane. It localises to the nucleus. The protein resides in the cytoplasm. The catalysed reaction is a 1,2-diacyl-sn-glycero-3-phospho-(1D-myo-inositol-5-phosphate) + ATP = a 1,2-diacyl-sn-glycero-3-phospho-(1D-myo-inositol-4,5-bisphosphate) + ADP + H(+). It catalyses the reaction 1,2-dihexadecanoyl-sn-glycero-3-phospho-(1D-myo-inositol-5-phosphate) + ATP = 1,2-dihexadecanoyl-sn-glycero-3-phospho-(1D-myo-inositol-4,5-bisphosphate) + ADP + H(+). The enzyme catalyses 1,2-dihexadecanoyl-sn-glycero-3-phospho-(1D-myo-inositol-5-phosphate) + GTP = 1,2-dihexadecanoyl-sn-glycero-3-phospho-(1D-myo-inositol-4,5-bisphosphate) + GDP + H(+). Participates in the biosynthesis of phosphatidylinositol 4,5-bisphosphate. Preferentially utilizes GTP, rather than ATP, for PI(5)P phosphorylation and its activity reflects changes in direct proportion to the physiological GTP concentration. Its GTP-sensing activity is critical for metabolic adaptation. PIP4Ks negatively regulate insulin signaling through a catalytic-independent mechanism. They interact with PIP5Ks and suppress PIP5K-mediated PtdIns(4,5)P2 synthesis and insulin-dependent conversion to PtdIns(3,4,5)P3. The polypeptide is Phosphatidylinositol 5-phosphate 4-kinase type-2 beta (Homo sapiens (Human)).